The sequence spans 845 residues: Protein P (845 aa).

Residues 1 to 179 (MPLSYQHFRK…FCGSPYSWEQ (179 aa)) form a terminal protein domain (TP) region. The spacer stretch occupies residues 180–348 (ELQHGRLVIK…YCLSHLVNLR (169 aa)). Residues 226 to 252 (GLQPRQGRLASSQPSRSGSIRAKAHPS) form a disordered region. The segment covering 234 to 243 (LASSQPSRSG) has biased composition (polar residues). Residues 349–692 (EDWGPCDEHG…YMNLYPVARQ (344 aa)) form a polymerase/reverse transcriptase domain (RT) region. In terms of domain architecture, Reverse transcriptase spans 359-602 (EHHIRIPRTP…YSLNFMGYII (244 aa)). Mg(2+) contacts are provided by Asp431, Asp553, and Asp554. The rnaseH domain (RH) stretch occupies residues 693–845 (RPGLCQVFAD…SPLHVAWRPP (153 aa)).

Belongs to the hepadnaviridae P protein family.

It carries out the reaction DNA(n) + a 2'-deoxyribonucleoside 5'-triphosphate = DNA(n+1) + diphosphate. It catalyses the reaction Endonucleolytic cleavage to 5'-phosphomonoester.. Activated by host HSP70 and HSP40 in vitro to be able to bind the epsilon loop of the pgRNA. Because deletion of the RNase H region renders the protein partly chaperone-independent, the chaperones may be needed indirectly to relieve occlusion of the RNA-binding site by this domain. Inhibited by several reverse-transcriptase inhibitors: Lamivudine, Adefovir and Entecavir. Its function is as follows. Multifunctional enzyme that converts the viral RNA genome into dsDNA in viral cytoplasmic capsids. This enzyme displays a DNA polymerase activity that can copy either DNA or RNA templates, and a ribonuclease H (RNase H) activity that cleaves the RNA strand of RNA-DNA heteroduplexes in a partially processive 3'- to 5'-endonucleasic mode. Neo-synthesized pregenomic RNA (pgRNA) are encapsidated together with the P protein, and reverse-transcribed inside the nucleocapsid. Initiation of reverse-transcription occurs first by binding the epsilon loop on the pgRNA genome, and is initiated by protein priming, thereby the 5'-end of (-)DNA is covalently linked to P protein. Partial (+)DNA is synthesized from the (-)DNA template and generates the relaxed circular DNA (RC-DNA) genome. After budding and infection, the RC-DNA migrates in the nucleus, and is converted into a plasmid-like covalently closed circular DNA (cccDNA). The activity of P protein does not seem to be necessary for cccDNA generation, and is presumably released from (+)DNA by host nuclear DNA repair machinery. The chain is Protein P from Homo sapiens (Human).